Here is a 93-residue protein sequence, read N- to C-terminus: DNA/RNA-binding protein Alba (93 aa).

Lysine 11 is subject to N6-acetyllysine.

The protein belongs to the histone-like Alba family. In terms of processing, acetylated. Acetylation at Lys-11 decreases DNA-binding affinity.

The protein resides in the cytoplasm. It localises to the chromosome. Binds double-stranded DNA tightly but without sequence specificity. Involved in DNA compaction. This is DNA/RNA-binding protein Alba from Pyrococcus horikoshii (strain ATCC 700860 / DSM 12428 / JCM 9974 / NBRC 100139 / OT-3).